Reading from the N-terminus, the 548-residue chain is 5-epi-aristolochene synthase 1 (548 aa).

Asp-301, Asp-305, Asp-444, Thr-448, and Glu-452 together coordinate Mg(2+). Residues 301-305 (DDTFD) carry the DDXXD motif motif.

It belongs to the terpene synthase family. As to quaternary structure, monomer. Requires Mg(2+) as cofactor. In terms of tissue distribution, expressed in roots, but not in shoots.

The protein resides in the cytoplasm. It catalyses the reaction (2E,6E)-farnesyl diphosphate = (+)-5-epi-aristolochene + diphosphate. The protein operates within secondary metabolite biosynthesis; terpenoid biosynthesis. Its function is as follows. Catalyzes the cyclization of trans,trans-farnesyl diphosphate (FPP) to the bicyclic intermediate 5-epi-aristolochene, initial step in the conversion of FPP to the sesquiterpenoid antifungal phytoalexin capsidiol. Produces germacrene A as an enzyme-bound intermediate that is not released by the enzyme, but is further cyclized to produce the bicyclic 5-epi-aristolochene. This chain is 5-epi-aristolochene synthase 1 (EAS), found in Nicotiana attenuata (Coyote tobacco).